Here is a 289-residue protein sequence, read N- to C-terminus: Survival motor neuron protein (289 aa).

Positions 1 to 10 are enriched in gly residues; sequence MAMGSGGGAG. The interval 1–27 is disordered; that stretch reads MAMGSGGGAGSEQEDTVLFRRGTGQSD. A P1 (binding site for GEMIN2) region spans residues 11 to 42; that stretch reads SEQEDTVLFRRGTGQSDDSDIWDDTALIKAYD. Threonine 23 bears the Phosphothreonine mark. 2 positions are modified to phosphoserine: serine 26 and serine 29. Lysine 49 is covalently cross-linked (Glycyl lysine isopeptide (Lys-Gly) (interchain with G-Cter in SUMO2)). Positions 55-88 are disordered; the sequence is GDMCETSDKPKGTARRKPAKKNKNQKKNATAPLK. Residues 66–80 are compositionally biased toward basic residues; it reads GTARRKPAKKNKNQK. Threonine 67 bears the Phosphothreonine mark. Positions 89-149 constitute a Tudor domain; it reads QWKAGDKCSA…LSPTCEVANN (61 aa). The segment at 95–205 is required for interaction with RPP20/POP7; sequence KCSAVWSEDG…VPGAGLGPGK (111 aa). The segment at 150 to 226 is disordered; it reads TEQNTQENES…PPPPPPFLPC (77 aa). Positions 171–181 are enriched in basic residues; that stretch reads RSLRSKAHSKS. A Glycyl lysine isopeptide (Lys-Gly) (interchain with G-Cter in SUMO2) cross-link involves residue lysine 205. Pro residues predominate over residues 212–226; it reads GPPPPPPPPPPFLPC. The segment at 235-262 is P2 (binding site for SM B); it reads PPIIPPPPPISPDCLDDTDALGSMLISW. Positions 274–289 are required for interaction with SYNCRIP; the sequence is GFRQNKKEGKKCSHTN.

It belongs to the SMN family. As to quaternary structure, homooligomer; may form higher order homooligomers in the dimer to octamer range. Part of the core SMN complex that contains SMN1, GEMIN2/SIP1, DDX20/GEMIN3, GEMIN4, GEMIN5, GEMIN6, GEMIN7, GEMIN8 and STRAP/UNRIP. Part of the SMN-Sm complex that contains SMN1, GEMIN2/SIP1, DDX20/GEMIN3, GEMIN4, GEMIN5, GEMIN6, GEMIN7, GEMIN8, STRAP/UNRIP and the Sm proteins SNRPB, SNRPD1, SNRPD2, SNRPD3, SNRPE, SNRPF and SNRPG. Component of an import snRNP complex composed of KPNB1, RNUT1, SMN1 and ZNF259. Interacts with DDX20, FBL, NOLA1, RNUT1 and with several spliceosomal snRNP core Sm proteins, including SNRPB, SNRPD1, SNRPD2, SNRPD3, SNRPE and ILF3. Interacts with GEMIN2; the interaction is direct. Interacts with GEMIN3; the interaction is direct. Interacts with GEMIN8; the interaction is direct. Interacts with SNRPB; the interaction is direct. Interacts (via Tudor domain) with SNRPD1 (via C-terminus); the interaction is direct. Interacts with SNRPD2; the interaction is direct. Interacts (via Tudor domain) with SNRPD3 (via C-terminus); the interaction is direct. Interacts with SNRPE; the interaction is direct. Interacts with OSTF1, LSM10, LSM11 and RPP20/POP7. Interacts (via C-terminal region) with ZPR1 (via C-terminal region). Interacts (via Tudor domain) with COIL. Interacts with SETX; recruits SETX to POLR2A. Interacts with POLR2A (via the C-terminal domain (CTD)). Interacts with PRMT5. Interacts with XRN2. Interacts (via C-terminus) with FMR1 (via C-terminus); the interaction is direct and occurs in a RNA-independent manner. Interacts with SYNCRIP. Interacts (via Tudor domain) with SF3B2 (methylated form). Interacts with WRAP53/TCAB1. Interacts (via Tudor domain) with ELAVL4 in an RNA-independent manner; the interaction is required for localization of ELAVL4 to RNA granules. Interacts with FRG1.

It is found in the nucleus. Its subcellular location is the gem. It localises to the cajal body. The protein localises to the cytoplasm. The protein resides in the cytoplasmic granule. It is found in the perikaryon. Its subcellular location is the cell projection. It localises to the neuron projection. The protein localises to the axon. The protein resides in the myofibril. It is found in the sarcomere. Its subcellular location is the z line. Functionally, the SMN complex catalyzes the assembly of small nuclear ribonucleoproteins (snRNPs), the building blocks of the spliceosome, and thereby plays an important role in the splicing of cellular pre-mRNAs. Most spliceosomal snRNPs contain a common set of Sm proteins SNRPB, SNRPD1, SNRPD2, SNRPD3, SNRPE, SNRPF and SNRPG that assemble in a heptameric protein ring on the Sm site of the small nuclear RNA to form the core snRNP (Sm core). In the cytosol, the Sm proteins SNRPD1, SNRPD2, SNRPE, SNRPF and SNRPG are trapped in an inactive 6S pICln-Sm complex by the chaperone CLNS1A that controls the assembly of the core snRNP. To assemble core snRNPs, the SMN complex accepts the trapped 5Sm proteins from CLNS1A forming an intermediate. Binding of snRNA inside 5Sm ultimately triggers eviction of the SMN complex, thereby allowing binding of SNRPD3 and SNRPB to complete assembly of the core snRNP. Within the SMN complex, SMN1 acts as a structural backbone and together with GEMIN2 it gathers the Sm complex subunits. Ensures the correct splicing of U12 intron-containing genes that may be important for normal motor and proprioceptive neurons development. Also required for resolving RNA-DNA hybrids created by RNA polymerase II, that form R-loop in transcription terminal regions, an important step in proper transcription termination. May also play a role in the metabolism of small nucleolar ribonucleoprotein (snoRNPs). The polypeptide is Survival motor neuron protein (Smn1) (Rattus norvegicus (Rat)).